The primary structure comprises 48 residues: uncharacterized protein (48 aa).

It belongs to the ELIP/psbS family.

The protein localises to the plastid. The protein resides in the chloroplast. In terms of biological role, possible role in chlorophyll and/or carotenoid binding. This is an uncharacterized protein from Pyropia yezoensis (Susabi-nori).